Reading from the N-terminus, the 263-residue chain is MRILITNDDGINAPGLAVLERIASALSDDVFVVAPESDQSGVAHSLSLSDPLRLRKISDRRFAVKGTPTDCVIMGVRSILIEQKPDLVLSGVNCGQNLAEDVIYSGTVAGAMEGTILGIPSIALSQCYEAGTGGRSGIAWDCAEVHAPGIIKHLLETGIDPDVVINLNFPACPASEVTGLAVTAQGRRDATTIKIDPRQDGRGLPYYWIAFARDTRQPGVGTDLEAVAQKRIALTPLRIDLTDDPTMTRLAQSLPKTLPKVAG.

A divalent metal cation contacts are provided by Asp-8, Asp-9, Ser-40, and Asn-93.

It belongs to the SurE nucleotidase family. Requires a divalent metal cation as cofactor.

It is found in the cytoplasm. The catalysed reaction is a ribonucleoside 5'-phosphate + H2O = a ribonucleoside + phosphate. Functionally, nucleotidase that shows phosphatase activity on nucleoside 5'-monophosphates. The protein is 5'-nucleotidase SurE of Beijerinckia indica subsp. indica (strain ATCC 9039 / DSM 1715 / NCIMB 8712).